A 274-amino-acid polypeptide reads, in one-letter code: Rhamnulose-1-phosphate aldolase (274 aa).

Glu117 is an active-site residue. Zn(2+) contacts are provided by His141, His143, and His212.

Belongs to the aldolase class II family. RhaD subfamily. As to quaternary structure, homotetramer. Zn(2+) is required as a cofactor.

It localises to the cytoplasm. It catalyses the reaction L-rhamnulose 1-phosphate = (S)-lactaldehyde + dihydroxyacetone phosphate. The protein operates within carbohydrate degradation; L-rhamnose degradation; glycerone phosphate from L-rhamnose: step 3/3. Its function is as follows. Catalyzes the reversible cleavage of L-rhamnulose-1-phosphate to dihydroxyacetone phosphate (DHAP) and L-lactaldehyde. This is Rhamnulose-1-phosphate aldolase from Escherichia coli (strain SMS-3-5 / SECEC).